The following is a 364-amino-acid chain: Putative agmatine deiminase 1 (364 aa).

Cysteine 356 acts as the Amidino-cysteine intermediate in catalysis.

Belongs to the agmatine deiminase family.

It carries out the reaction agmatine + H2O = N-carbamoylputrescine + NH4(+). The polypeptide is Putative agmatine deiminase 1 (Listeria monocytogenes serotype 4b (strain F2365)).